The following is a 25-amino-acid chain: Chrysophsin-2 (25 aa).

Residue His-25 is modified to Histidine amide.

As to expression, gill.

Its subcellular location is the secreted. Its function is as follows. Has antibacterial activity against Gram-positive bacteria B.subtilis ATCC 6633, L.garvieae ATCC 49156 and S.iniae F-8502, and Gram-negative bacteria E.coli WT-2, V.anguillarum ATCC 19264, V.penaeicida KHA, V.harveyi ATCC 14126, V.vulnificus ATCC 33148 and A.salmonicida NCMB 1102. Has hemolytic activity against human red blood cells. Seems to disrupt the membranes by adopting an alpha helical conformation. May play a significant role in innate host defense. This is Chrysophsin-2 from Pagrus major (Red sea bream).